The following is a 318-amino-acid chain: Replication factor C small subunit (318 aa).

43-50 (GSVGTGKT) serves as a coordination point for ATP.

This sequence belongs to the activator 1 small subunits family. RfcS subfamily. In terms of assembly, heteromultimer composed of small subunits (RfcS) and large subunits (RfcL).

In terms of biological role, part of the RFC clamp loader complex which loads the PCNA sliding clamp onto DNA. In Thermoplasma volcanium (strain ATCC 51530 / DSM 4299 / JCM 9571 / NBRC 15438 / GSS1), this protein is Replication factor C small subunit.